Reading from the N-terminus, the 58-residue chain is Large ribosomal subunit protein uL30 (58 aa).

The protein belongs to the universal ribosomal protein uL30 family. As to quaternary structure, part of the 50S ribosomal subunit.

The polypeptide is Large ribosomal subunit protein uL30 (Porphyromonas gingivalis (strain ATCC 33277 / DSM 20709 / CIP 103683 / JCM 12257 / NCTC 11834 / 2561)).